Reading from the N-terminus, the 215-residue chain is Protein-L-isoaspartate O-methyltransferase 1 (215 aa).

Ser61 is an active-site residue.

This sequence belongs to the methyltransferase superfamily. L-isoaspartyl/D-aspartyl protein methyltransferase family.

Its subcellular location is the cytoplasm. It catalyses the reaction [protein]-L-isoaspartate + S-adenosyl-L-methionine = [protein]-L-isoaspartate alpha-methyl ester + S-adenosyl-L-homocysteine. In terms of biological role, catalyzes the methyl esterification of L-isoaspartyl residues in peptides and proteins that result from spontaneous decomposition of normal L-aspartyl and L-asparaginyl residues. It plays a role in the repair and/or degradation of damaged proteins. The chain is Protein-L-isoaspartate O-methyltransferase 1 from Pelobacter propionicus (strain DSM 2379 / NBRC 103807 / OttBd1).